A 165-amino-acid chain; its full sequence is K(+)/H(+) antiporter subunit KhtT (165 aa).

One can recognise an RCK C-terminal domain in the interval 76–161; that stretch reads LESIEMAFSD…LKKLIHDFLS (86 aa).

As to quaternary structure, the transporter is composed of the integral membrane protein KhtU and the regulatory protein KhtT.

It localises to the cell membrane. With respect to regulation, binds cyclic di-AMP (c-di-AMP), which may regulate the activity. Its function is as follows. Required for activity of the potassium/proton antiporter KhtU. Involved in protection of the cell from methylglyoxal, a toxic by-product of glycolysis. The sequence is that of K(+)/H(+) antiporter subunit KhtT from Bacillus subtilis (strain 168).